The following is a 180-amino-acid chain: MNPAPNLILIGPMGAGKTCIGRRLAERFTLDFVDVDQAIVDAAGASIPTIFEHSGETGFRSHEREALARVLEGRGQLVSTGGGAVLDPDNRALIARRGFVVYLRVSVAEQLERLARDKGRPLLQRPDREQVLHDLAAHRDPLYRELADLILDTDPYTAADATAQLVVKLATQWQRQDLTA.

14 to 19 contributes to the ATP binding site; that stretch reads GAGKTC. Mg(2+) is bound at residue T18. Substrate-binding residues include D36, R60, and G82. R120 is an ATP binding site. R139 lines the substrate pocket.

This sequence belongs to the shikimate kinase family. Monomer. Mg(2+) serves as cofactor.

The protein localises to the cytoplasm. It catalyses the reaction shikimate + ATP = 3-phosphoshikimate + ADP + H(+). The protein operates within metabolic intermediate biosynthesis; chorismate biosynthesis; chorismate from D-erythrose 4-phosphate and phosphoenolpyruvate: step 5/7. Its function is as follows. Catalyzes the specific phosphorylation of the 3-hydroxyl group of shikimic acid using ATP as a cosubstrate. The polypeptide is Shikimate kinase (Stenotrophomonas maltophilia (strain R551-3)).